Reading from the N-terminus, the 320-residue chain is o-succinylbenzoate synthase (320 aa).

Catalysis depends on lysine 133, which acts as the Proton donor. The Mg(2+) site is built by aspartate 161, glutamate 190, and aspartate 213. Lysine 235 functions as the Proton acceptor in the catalytic mechanism.

It belongs to the mandelate racemase/muconate lactonizing enzyme family. MenC type 1 subfamily. The cofactor is a divalent metal cation.

It carries out the reaction (1R,6R)-6-hydroxy-2-succinyl-cyclohexa-2,4-diene-1-carboxylate = 2-succinylbenzoate + H2O. It participates in quinol/quinone metabolism; 1,4-dihydroxy-2-naphthoate biosynthesis; 1,4-dihydroxy-2-naphthoate from chorismate: step 4/7. The protein operates within quinol/quinone metabolism; menaquinone biosynthesis. Converts 2-succinyl-6-hydroxy-2,4-cyclohexadiene-1-carboxylate (SHCHC) to 2-succinylbenzoate (OSB). The chain is o-succinylbenzoate synthase from Salmonella paratyphi A (strain ATCC 9150 / SARB42).